Consider the following 78-residue polypeptide: Large ribosomal subunit protein uL29 (78 aa).

This sequence belongs to the universal ribosomal protein uL29 family.

This chain is Large ribosomal subunit protein uL29, found in Rhodococcus opacus (strain B4).